The sequence spans 289 residues: Acetyl-coenzyme A carboxylase carboxyl transferase subunit beta (289 aa).

The region spanning 34–289 is the CoA carboxyltransferase N-terminal domain; sequence MWVKCNKCGD…KLINMHQNSF (256 aa). Residues cysteine 38, cysteine 41, cysteine 57, and cysteine 60 each coordinate Zn(2+). A C4-type zinc finger spans residues 38–60; that stretch reads CNKCGDILYQNDLEKNYMVCNLC.

Belongs to the AccD/PCCB family. In terms of assembly, acetyl-CoA carboxylase is a heterohexamer composed of biotin carboxyl carrier protein (AccB), biotin carboxylase (AccC) and two subunits each of ACCase subunit alpha (AccA) and ACCase subunit beta (AccD). The cofactor is Zn(2+).

It is found in the cytoplasm. The catalysed reaction is N(6)-carboxybiotinyl-L-lysyl-[protein] + acetyl-CoA = N(6)-biotinyl-L-lysyl-[protein] + malonyl-CoA. Its pathway is lipid metabolism; malonyl-CoA biosynthesis; malonyl-CoA from acetyl-CoA: step 1/1. In terms of biological role, component of the acetyl coenzyme A carboxylase (ACC) complex. Biotin carboxylase (BC) catalyzes the carboxylation of biotin on its carrier protein (BCCP) and then the CO(2) group is transferred by the transcarboxylase to acetyl-CoA to form malonyl-CoA. This Clostridium botulinum (strain Langeland / NCTC 10281 / Type F) protein is Acetyl-coenzyme A carboxylase carboxyl transferase subunit beta.